We begin with the raw amino-acid sequence, 301 residues long: Thymidylate synthase (301 aa).

Residues arginine 38 and 163 to 164 each bind dUMP; that span reads RR. The active-site Nucleophile is cysteine 183. DUMP contacts are provided by residues 203 to 206, asparagine 214, and 244 to 246; these read RSGD and HIY. (6R)-5,10-methylene-5,6,7,8-tetrahydrofolate is bound at residue aspartate 206. Residue alanine 300 coordinates (6R)-5,10-methylene-5,6,7,8-tetrahydrofolate.

This sequence belongs to the thymidylate synthase family. In terms of assembly, homodimer.

It catalyses the reaction dUMP + (6R)-5,10-methylene-5,6,7,8-tetrahydrofolate = 7,8-dihydrofolate + dTMP. Its pathway is pyrimidine metabolism; dTTP biosynthesis. In terms of biological role, catalyzes the reductive methylation of deoxyuridylate to thymidylate. The chain is Thymidylate synthase from Varicella-zoster virus (strain Dumas) (HHV-3).